Here is a 201-residue protein sequence, read N- to C-terminus: Urease accessory protein UreG (201 aa).

11-18 serves as a coordination point for GTP; that stretch reads GPVGSGKT.

This sequence belongs to the SIMIBI class G3E GTPase family. UreG subfamily. In terms of assembly, homodimer. UreD, UreF and UreG form a complex that acts as a GTP-hydrolysis-dependent molecular chaperone, activating the urease apoprotein by helping to assemble the nickel containing metallocenter of UreC. The UreE protein probably delivers the nickel.

It is found in the cytoplasm. In terms of biological role, facilitates the functional incorporation of the urease nickel metallocenter. This process requires GTP hydrolysis, probably effectuated by UreG. The protein is Urease accessory protein UreG of Synechococcus sp. (strain CC9902).